Reading from the N-terminus, the 161-residue chain is ATP synthase subunit b 1 (161 aa).

A helical membrane pass occupies residues 6–26; sequence ETWVAIAFVILMVVFGYLGVF.

It belongs to the ATPase B chain family. As to quaternary structure, F-type ATPases have 2 components, F(1) - the catalytic core - and F(0) - the membrane proton channel. F(1) has five subunits: alpha(3), beta(3), gamma(1), delta(1), epsilon(1). F(0) has three main subunits: a(1), b(2) and c(10-14). The alpha and beta chains form an alternating ring which encloses part of the gamma chain. F(1) is attached to F(0) by a central stalk formed by the gamma and epsilon chains, while a peripheral stalk is formed by the delta and b chains.

The protein resides in the cell inner membrane. Functionally, f(1)F(0) ATP synthase produces ATP from ADP in the presence of a proton or sodium gradient. F-type ATPases consist of two structural domains, F(1) containing the extramembraneous catalytic core and F(0) containing the membrane proton channel, linked together by a central stalk and a peripheral stalk. During catalysis, ATP synthesis in the catalytic domain of F(1) is coupled via a rotary mechanism of the central stalk subunits to proton translocation. In terms of biological role, component of the F(0) channel, it forms part of the peripheral stalk, linking F(1) to F(0). This is ATP synthase subunit b 1 from Bradyrhizobium diazoefficiens (strain JCM 10833 / BCRC 13528 / IAM 13628 / NBRC 14792 / USDA 110).